The sequence spans 509 residues: UDP-N-acetylmuramoyl-L-alanyl-D-glutamate--2,6-diaminopimelate ligase (509 aa).

Serine 32 is a UDP-N-acetyl-alpha-D-muramoyl-L-alanyl-D-glutamate binding site. Residue 117–123 participates in ATP binding; the sequence is GTNGKTT. Residues 159 to 160, serine 186, glutamine 192, and arginine 194 contribute to the UDP-N-acetyl-alpha-D-muramoyl-L-alanyl-D-glutamate site; that span reads TT. An N6-carboxylysine modification is found at lysine 226. Meso-2,6-diaminopimelate contacts are provided by residues arginine 401, 425-428, glycine 476, and glutamate 480; that span reads DNPR. Residues 425–428 carry the Meso-diaminopimelate recognition motif motif; sequence DNPR.

This sequence belongs to the MurCDEF family. MurE subfamily. Requires Mg(2+) as cofactor. Carboxylation is probably crucial for Mg(2+) binding and, consequently, for the gamma-phosphate positioning of ATP.

It localises to the cytoplasm. It catalyses the reaction UDP-N-acetyl-alpha-D-muramoyl-L-alanyl-D-glutamate + meso-2,6-diaminopimelate + ATP = UDP-N-acetyl-alpha-D-muramoyl-L-alanyl-gamma-D-glutamyl-meso-2,6-diaminopimelate + ADP + phosphate + H(+). Its pathway is cell wall biogenesis; peptidoglycan biosynthesis. In terms of biological role, catalyzes the addition of meso-diaminopimelic acid to the nucleotide precursor UDP-N-acetylmuramoyl-L-alanyl-D-glutamate (UMAG) in the biosynthesis of bacterial cell-wall peptidoglycan. The polypeptide is UDP-N-acetylmuramoyl-L-alanyl-D-glutamate--2,6-diaminopimelate ligase (Prochlorococcus marinus (strain NATL2A)).